A 548-amino-acid chain; its full sequence is Cilia- and flagella-associated protein 97 (548 aa).

Phosphoserine occurs at positions 8 and 19. 3 disordered regions span residues 85–297 (NYLT…RQEN), 407–431 (LSRQ…PPKL), and 497–548 (YSPL…LRSH). Positions 91–107 (GNERKPKFPSKEQHVEN) are enriched in basic and acidic residues. Residues 112–121 (TRSPSLLTSS) show a composition bias toward low complexity. The segment covering 152–161 (DYYTDGEESS) has biased composition (acidic residues). T155 bears the Phosphothreonine mark. S160 and S161 each carry phosphoserine. Over residues 191-209 (KASSSSLSSSSSRSSSDCS) the composition is skewed to low complexity. The segment covering 214–237 (DMQNKPDSGSSGKRVSSVTPSSPK) has biased composition (polar residues). Phosphoserine is present on S235. Residues 238–248 (QKCKSGRKSSA) show a composition bias toward basic residues. S259 carries the post-translational modification Phosphoserine. A compositionally biased stretch (polar residues) spans 264-289 (TDVTPASTPDSSPAQPFELSQSQNQK). Residues 383–460 (RKNYSFTREE…ALLKRLEAVK (78 aa)) adopt a coiled-coil conformation. Composition is skewed to polar residues over residues 504-514 (SRTSSATSGLS) and 537-548 (IQCSNSKVLRSH).

This sequence belongs to the CFAP97 family.

The sequence is that of Cilia- and flagella-associated protein 97 from Rattus norvegicus (Rat).